The sequence spans 225 residues: Ribonuclease 3 (225 aa).

Residues 5 to 127 (VTELYKTIDY…IIGAVFLDSD (123 aa)) form the RNase III domain. Glu-40 lines the Mg(2+) pocket. The active site involves Asp-44. Asp-113 and Glu-116 together coordinate Mg(2+). Residue Glu-116 is part of the active site. The DRBM domain maps to 154–223 (DPKTLLQEHL…AEKALKILKN (70 aa)).

This sequence belongs to the ribonuclease III family. In terms of assembly, homodimer. The cofactor is Mg(2+).

The protein localises to the cytoplasm. The catalysed reaction is Endonucleolytic cleavage to 5'-phosphomonoester.. Digests double-stranded RNA. Involved in the processing of primary rRNA transcript to yield the immediate precursors to the large and small rRNAs (23S and 16S). Processes some mRNAs, and tRNAs when they are encoded in the rRNA operon. Processes pre-crRNA and tracrRNA of type II CRISPR loci if present in the organism. The sequence is that of Ribonuclease 3 from Pseudoalteromonas translucida (strain TAC 125).